The chain runs to 256 residues: Coiled-coil domain-containing protein 90B, mitochondrial (256 aa).

A mitochondrion-targeting transit peptide spans 1-42 (MRSRWIWRFLRPDGGGIRWTSTPHGRLSPALRRGFLTTTTKS). Residues 129–167 (LEKSEFANLRAENEKMKIELDQVKQQLTNETSRIRADNK) are a coiled coil. A helical membrane pass occupies residues 231–253 (TIRYLAASVFTCLAIALGFYRFW).

The protein belongs to the CCDC90 family. Interacts with MCU.

It localises to the mitochondrion membrane. The protein is Coiled-coil domain-containing protein 90B, mitochondrial (Ccdc90b) of Mus musculus (Mouse).